Consider the following 153-residue polypeptide: Transcription antitermination protein NusB (153 aa).

Belongs to the NusB family.

Its function is as follows. Involved in transcription antitermination. Required for transcription of ribosomal RNA (rRNA) genes. Binds specifically to the boxA antiterminator sequence of the ribosomal RNA (rrn) operons. The chain is Transcription antitermination protein NusB from Symbiobacterium thermophilum (strain DSM 24528 / JCM 14929 / IAM 14863 / T).